The chain runs to 94 residues: Endoribonuclease VapD 2 (94 aa).

This sequence belongs to the VapD ribonuclease family. In terms of assembly, homodimer.

In terms of biological role, cleaves ssRNA, mostly between U:A. The polypeptide is Endoribonuclease VapD 2 (Riemerella anatipestifer (Moraxella anatipestifer)).